A 331-amino-acid chain; its full sequence is (+)-aristolochene synthase TS1 (331 aa).

The disordered stretch occupies residues 1 to 22 (MTRMKNSSSNVTSASGSGSGSG). A compositionally biased stretch (low complexity) spans 7-16 (SSSNVTSASG). Positions 102, 231, 235, and 239 each coordinate Mg(2+). The short motif at 102 to 106 (DDLLE) is the DDxx(x)D/E motif element. The short motif at 231–239 (NDVYSYEKE) is the NDxxSxxxD/E motif element. 2 residues coordinate (2E,6E)-farnesyl diphosphate: arginine 326 and tyrosine 327.

Belongs to the terpene synthase family. Homodimer. The cofactor is Mg(2+).

It catalyses the reaction (2E,6E)-farnesyl diphosphate = (+)-aristolochene + diphosphate. It functions in the pathway sesquiterpene biosynthesis; aristolochene biosynthesis; aristolochene from farnesyl diphosphate: step 1/1. Catalyzes the cyclization of trans,trans-farnesyl diphosphate (FPP) to the bicyclic sesquiterpene aristolochene. Aristolochene is the likely parent compound for a number of sesquiterpenoid toxins produced by filamentous fungi. This Penicillium expansum (Blue mold rot fungus) protein is (+)-aristolochene synthase TS1.